Reading from the N-terminus, the 2089-residue chain is Rho GTPase-activating protein 32 (2089 aa).

The interval 24–52 is disordered; the sequence is TQLTDGDEEEREESFRKMKSSIHSEEDDF. In terms of domain architecture, PX; atypical spans 131–245; it reads GSIQLSLSEE…LTWMEIDNKG (115 aa). In terms of domain architecture, SH3 spans 259 to 321; that stretch reads PAVGAAHVIK…PGHCVELINQ (63 aa). The Rho-GAP domain maps to 372–567; it reads CDLGEHLLNS…FILNHVDVLF (196 aa). Residues Ser-706, Ser-709, Ser-732, and Ser-738 each carry the phosphoserine modification. Basic and acidic residues predominate over residues 828-837; it reads KLSPSKKDAE. Positions 828 to 858 are disordered; sequence KLSPSKKDAEAGGSQSQTPGSTASSEPVSPV. Residues 840-854 are compositionally biased toward polar residues; the sequence is GSQSQTPGSTASSEP. Phosphoserine occurs at positions 852, 856, 892, and 952. Disordered stretches follow at residues 955–1037, 1119–1141, and 1154–1197; these read QLQL…PPPP, CNQPLPEAAAMGGPTQSNTTDSG, and LHRN…SVST. 2 stretches are compositionally biased toward polar residues: residues 998 to 1014 and 1132 to 1141; these read LSSQSKAVPSGQSQTGA and PTQSNTTDSG. Basic and acidic residues predominate over residues 1175–1191; the sequence is DSEKSDDHGSFPEDHAG. The residue at position 1206 (Ser-1206) is a Phosphoserine. Positions 1221–1368 are disordered; it reads GTSVDKPHHS…GDPAPIFLSD (148 aa). The span at 1225–1235 shows a compositional bias: basic and acidic residues; the sequence is DKPHHSSELTD. Positions 1262-1275 are enriched in low complexity; sequence TATMAYMMATPARA. The tract at residues 1395–1714 is interaction with GAB2; that stretch reads RAPPLHLRAE…YNYAGLPPRP (320 aa). Asymmetric dimethylarginine is present on residues Arg-1526 and Arg-1536. Residue Ser-1588 is modified to Phosphoserine. Residues 1688-2089 form an interaction with FYN region; it reads SSRDFAFYNP…PHPDTQIHAE (402 aa). Disordered regions lie at residues 1801–1865 and 1881–2002; these read PGKT…QSSL and RAHQ…LERD. Over residues 1826–1841 the composition is skewed to basic and acidic residues; the sequence is GDERFYRKHPESEFDR. Residues 1850–1865 show a composition bias toward polar residues; it reads STQAEKPSLPQKQSSL. A compositionally biased stretch (basic and acidic residues) spans 1881–1892; it reads RAHQEASHRQLC. Residues 1918 to 1939 show a composition bias toward polar residues; it reads SEPSNYHNSGKYMTSGQGSLTL. 2 stretches are compositionally biased toward basic and acidic residues: residues 1940-1954 and 1961-1975; these read NHKEVRLPKDLDRPR and PEKHSRDCYKEEEHF. Arg-2039 is modified (omega-N-methylarginine).

The protein belongs to the PX domain-containing GAP family. As to quaternary structure, interacts with NTRK1 (via cytoplasmic domain); the interaction is independent of the phosphorylation state of NTRK1. Interacts with SHC3 (via SH2 domain). Interacts with RASA1 (via SH3 domain); the interaction is necessary for the Ras activation and cell transforming activities of ARHGAP32. Interacts with GAB1 and GAB2. Interacts with CRK and CRKL. Found in a complex with CRKL and BCAR1; upon EGF stimulation BCAR1 may be replaced by EGFR. Interacts with NCK1 (via SH3 domain); NCK1 recruits phosphorylated BCAR1 to the complex. Isoform 2 interacts with FYN; the interaction appears to be dependent on tyrosine phosphorylation of ARHGAP32. Interacts with EGFR; the interaction requires EGF stimulation and is increased by SHC3. Interacts with CDC42; the interaction requires constitutively active CDC42. Interacts with CTNNB1, DLG4, CDH2 and GRIN2B. Interacts with GPHN. Isoform 2 is phosphorylated on multiple tyrosine residues by FYN. Phosphorylated tyrosine residues undergo dephosphorylation after stimulation of NMDA receptors. Phosphorylated in vitro by CaMK2 in the presence of calmodulin and calcium; which inhibits GAP activity. Isoform 1 and isoform 2 are highly expressed in brain, specially in cortex, corpus striatum, hippocampus and thalamus. Low levels in cerebellum, colon, small intestine, and kidney.

The protein localises to the postsynaptic density. It localises to the cell projection. The protein resides in the dendritic spine. It is found in the cytoplasm. Its subcellular location is the cell cortex. The protein localises to the endosome membrane. It localises to the golgi apparatus membrane. The protein resides in the endoplasmic reticulum membrane. It is found in the membrane. Its function is as follows. GTPase-activating protein (GAP) promoting GTP hydrolysis on RHOA, CDC42 and RAC1 small GTPases. May be involved in the differentiation of neuronal cells during the formation of neurite extensions. Involved in NMDA receptor activity-dependent actin reorganization in dendritic spines. May mediate cross-talks between Ras- and Rho-regulated signaling pathways in cell growth regulation. Isoform 2 has higher GAP activity. The protein is Rho GTPase-activating protein 32 (Arhgap32) of Mus musculus (Mouse).